We begin with the raw amino-acid sequence, 386 residues long: Acetate kinase (386 aa).

Asn-9 serves as a coordination point for Mg(2+). Residue Lys-16 participates in ATP binding. Substrate is bound at residue Arg-74. Asp-131 functions as the Proton donor/acceptor in the catalytic mechanism. ATP contacts are provided by residues 191–195, 265–267, and 313–317; these read HLGNG, DFR, and GVGEN. Residue Glu-367 participates in Mg(2+) binding.

Belongs to the acetokinase family. As to quaternary structure, homodimer. Mg(2+) is required as a cofactor. Requires Mn(2+) as cofactor.

The protein resides in the cytoplasm. It carries out the reaction acetate + ATP = acetyl phosphate + ADP. The protein operates within metabolic intermediate biosynthesis; acetyl-CoA biosynthesis; acetyl-CoA from acetate: step 1/2. In terms of biological role, catalyzes the formation of acetyl phosphate from acetate and ATP. Can also catalyze the reverse reaction. In Mycolicibacterium gilvum (strain PYR-GCK) (Mycobacterium gilvum (strain PYR-GCK)), this protein is Acetate kinase.